Reading from the N-terminus, the 32-residue chain is U3-theraphotoxin-Hhn1r (32 aa).

3 disulfides stabilise this stretch: cysteine 2/cysteine 15, cysteine 9/cysteine 20, and cysteine 14/cysteine 27.

It belongs to the neurotoxin 10 (Hwtx-1) family. 16 (Hntx-8) subfamily. Expressed by the venom gland.

The protein localises to the secreted. Its function is as follows. Ion channel inhibitor. This Cyriopagopus hainanus (Chinese bird spider) protein is U3-theraphotoxin-Hhn1r.